Here is a 434-residue protein sequence, read N- to C-terminus: 3-phosphoshikimate 1-carboxyvinyltransferase (434 aa).

Positions 22, 23, and 27 each coordinate 3-phosphoshikimate. Lysine 22 serves as a coordination point for phosphoenolpyruvate. The phosphoenolpyruvate site is built by glycine 93 and arginine 121. 3-phosphoshikimate-binding residues include serine 168, serine 169, glutamine 170, serine 199, aspartate 320, and lysine 347. Residue glutamine 170 participates in phosphoenolpyruvate binding. The active-site Proton acceptor is aspartate 320. Phosphoenolpyruvate-binding residues include arginine 351, arginine 394, and lysine 419.

Belongs to the EPSP synthase family. In terms of assembly, monomer.

The protein localises to the cytoplasm. The enzyme catalyses 3-phosphoshikimate + phosphoenolpyruvate = 5-O-(1-carboxyvinyl)-3-phosphoshikimate + phosphate. The protein operates within metabolic intermediate biosynthesis; chorismate biosynthesis; chorismate from D-erythrose 4-phosphate and phosphoenolpyruvate: step 6/7. Its function is as follows. Catalyzes the transfer of the enolpyruvyl moiety of phosphoenolpyruvate (PEP) to the 5-hydroxyl of shikimate-3-phosphate (S3P) to produce enolpyruvyl shikimate-3-phosphate and inorganic phosphate. This Burkholderia vietnamiensis (strain G4 / LMG 22486) (Burkholderia cepacia (strain R1808)) protein is 3-phosphoshikimate 1-carboxyvinyltransferase.